The sequence spans 171 residues: ATP synthase subunit b (171 aa).

A helical transmembrane segment spans residues 31-51; sequence FFVVLAIFLVVLAVIGTFVVP.

Belongs to the ATPase B chain family. F-type ATPases have 2 components, F(1) - the catalytic core - and F(0) - the membrane proton channel. F(1) has five subunits: alpha(3), beta(3), gamma(1), delta(1), epsilon(1). F(0) has three main subunits: a(1), b(2) and c(10-14). The alpha and beta chains form an alternating ring which encloses part of the gamma chain. F(1) is attached to F(0) by a central stalk formed by the gamma and epsilon chains, while a peripheral stalk is formed by the delta and b chains.

Its subcellular location is the cell membrane. In terms of biological role, f(1)F(0) ATP synthase produces ATP from ADP in the presence of a proton or sodium gradient. F-type ATPases consist of two structural domains, F(1) containing the extramembraneous catalytic core and F(0) containing the membrane proton channel, linked together by a central stalk and a peripheral stalk. During catalysis, ATP synthesis in the catalytic domain of F(1) is coupled via a rotary mechanism of the central stalk subunits to proton translocation. Component of the F(0) channel, it forms part of the peripheral stalk, linking F(1) to F(0). The protein is ATP synthase subunit b of Mycobacterium bovis (strain ATCC BAA-935 / AF2122/97).